Here is a 266-residue protein sequence, read N- to C-terminus: Trypsin Blo t 3 (266 aa).

The signal sequence occupies residues 1–15 (MKVLVLFCLVSLAAA). Residues 16–35 (GPLKDALNKAQVDAFYAEGY) constitute a propeptide that is removed on maturation. The region spanning 36 to 260 (IVDGSNAADG…RVGNYISWIK (225 aa)) is the Peptidase S1 domain. Cysteines 60 and 76 form a disulfide. Residues His-75 and Asp-120 each act as charge relay system in the active site. Intrachain disulfides connect Cys-187/Cys-204 and Cys-216/Cys-240. The Charge relay system role is filled by Ser-220.

It belongs to the peptidase S1 family.

The protein localises to the secreted. The enzyme catalyses Preferential cleavage: Arg-|-Xaa, Lys-|-Xaa.. The sequence is that of Trypsin Blo t 3 from Blomia tropicalis (Mite).